A 314-amino-acid chain; its full sequence is Protein phosphatase PTC7 homolog fig (314 aa).

The region spanning 43 to 309 (PYLVTVVQGR…DDITLILSSV (267 aa)) is the PPM-type phosphatase domain. Mn(2+) is bound by residues Asp87, Gly88, and Asp232.

The protein belongs to the PP2C family. Mg(2+) serves as cofactor. The cofactor is Mn(2+).

It carries out the reaction O-phospho-L-seryl-[protein] + H2O = L-seryl-[protein] + phosphate. It catalyses the reaction O-phospho-L-threonyl-[protein] + H2O = L-threonyl-[protein] + phosphate. The polypeptide is Protein phosphatase PTC7 homolog fig (Drosophila simulans (Fruit fly)).